Reading from the N-terminus, the 1158-residue chain is Transient receptor potential cation channel subfamily M member 5 (1158 aa).

The Cytoplasmic segment spans residues 1–729 (MQTTQSSCPG…LTRWRKFWGA (729 aa)). At Ser-129 the chain carries Phosphoserine; by PKC. Ca(2+) contacts are provided by Cys-341, Asp-350, Asp-353, and Glu-354. Residues 488–507 (GRRMEERGPPKRPAGQKWLP) form a disordered region. Residues 552–572 (KIIKEMSHLEKEAEVARTMRE) adopt a coiled-coil conformation. Residues 730–754 (PVTVFLGNVVMYFAFLFLFTYVLLV) traverse the membrane as a helical segment. Residues 755–764 (DFRPPPQGPS) lie on the Extracellular side of the membrane. The chain crosses the membrane as a helical span at residues 765 to 784 (GSEVTLYFWVFTLVLEEIRQ). Glu-781 and Gln-784 together coordinate Ca(2+). At 785–805 (GFFTDEDTHLVKKFTLYVEDN) the chain is on the cytoplasmic side. A helical membrane pass occupies residues 806-824 (WNKCDMVAIFLFIVGVTCR). Asn-807 and Asp-810 together coordinate Ca(2+). Topologically, residues 825-831 (MVPSVFE) are extracellular. The chain crosses the membrane as a helical span at residues 832–854 (AGRTVLAIDFMVFTLRLIHIFAI). Residues 855–863 (HKQLGPKII) are Cytoplasmic-facing. Residues 864–893 (IVERMMKDVFFFLFFLSVWLVAYGVTTQAL) form a helical membrane-spanning segment. Residues 894–902 (LHPHDGRLE) lie on the Extracellular side of the membrane. Positions 903-938 (WIFRRVLYRPYLQIFGQIPLDEIDEARVNCSLHPLL) form an intramembrane region, pore-forming. The Selectivity filter signature appears at 917–919 (FGQ). At 939-950 (LESSASCPNLYA) the chain is on the extracellular side. A helical transmembrane segment spans residues 951–985 (NWLVILLLVTFLLVTNVLLMNLLIAMFSYTFQVVQ). The Cytoplasmic portion of the chain corresponds to 986–1158 (GNADMFWKFQ…LESGLPPSDT (173 aa)). Position 1002 (Glu-1002) interacts with Ca(2+). Residues 1127-1141 (TYSSSQNCGCRSQPA) show a composition bias toward polar residues. The interval 1127–1158 (TYSSSQNCGCRSQPASARDREYLESGLPPSDT) is disordered.

Belongs to the transient receptor (TC 1.A.4) family. LTrpC subfamily. TRPM5 sub-subfamily. Homotetramer. Multiple phosphorylation sites regulate the Gq/ TRPM5 modulation axis, with the Ser-129 playing a substantial role in this positive modulation. Strongly expressed in liver, heart, testis, brain and kidney. Detected in fetal liver, kidney, spleen, brain, heart and lung, and in adult skin, eyes, spleen, stomach, small intestine, colon, lung, bladder, pancreas and thymus. Biallelically expressed at all stages and tissues examined. Also expressed in subsets of taste receptor cells of the tongue, in olfactory sensory neurons of the main olfactory epithelium and in the vomeronasal organ.

Its subcellular location is the cell membrane. The catalysed reaction is Na(+)(in) = Na(+)(out). The enzyme catalyses K(+)(in) = K(+)(out). Ca(2+)-activated cation channel. Displays voltage dependence modulation. Regulated by PI(4,5)P2 levels. PI(4,5)P 2 reverses the Ca(2+) -induced desensitization of channels. Inhibited by flufenamic acid with an IC(50) of 24.5 uM and spermine with an IC(50) of 37 uM. Is a highly temperature-sensitive, heat activated channel showing a steep increase of inward currents at temperatures between 15 and 35 degrees Celsius. Heat activation is due to a shift of the voltage-dependent activation curve to negative potentials. The channel is blocked by extracellular acidification. Its function is as follows. Monovalent cation-selective ion channel activated by intracellular Ca(2+) in a voltage- and temperature-dependent manner. Mediates the transport of Na(+), K(+) and Cs(+) ions equally well. Activated directly by increase in intracellular Ca(2+), but is impermeable to it. The activation mechanism of TRPM5 involves a multistep process. TRPM5 activation involves ligand binding (i.e., tastant molecule, glucose stimulation) to Gq/G-protein coupled receptors (GPCR) and leads to the breakdown of phosphatidylinositol bisphosphate (PIP2) into diacylglycerol (DAG) and inositol trisphosphate (IP3), IP3 binds to its receptors in the endoplasmic reticulum and cause Ca(2+) release. Simultaneously with the intracellular Ca(2+) release, DAG activates the protein kinase C (PKC), which phosphorylates the TRPM5 channel. This phosphorylation combined with the bound Ca(2+), leads to a robust inward current allowing the entry of sodium ions (Na+) into the cell. This ion influx depolarizes the cell membrane, generating action potentials that propagate TRPM5 signals. Is a key player in sensing sweet, umami and bitter stimuli. May also be involved in sensing semiochemicals. Involved in insulin secretion by pancreatic beta cells. This Mus musculus (Mouse) protein is Transient receptor potential cation channel subfamily M member 5.